Reading from the N-terminus, the 231-residue chain is Succinate dehydrogenase subunit 5, mitochondrial (231 aa).

The transit peptide at Met-1–Phe-63 directs the protein to the mitochondrion.

In terms of assembly, component of complex II composed of eight subunits in plants: four classical SDH subunits SDH1, SDH2, SDH3 and SDH4 (a flavoprotein (FP), an iron-sulfur protein (IP), and a cytochrome b composed of a large and a small subunit.), as well as four subunits unknown in mitochondria from bacteria and heterotrophic eukaryotes.

Its subcellular location is the mitochondrion inner membrane. The protein operates within carbohydrate metabolism; tricarboxylic acid cycle. The polypeptide is Succinate dehydrogenase subunit 5, mitochondrial (Oryza sativa subsp. japonica (Rice)).